The sequence spans 986 residues: E3 ubiquitin-protein ligase Arkadia (986 aa).

Residues K19, K28, K34, K47, K59, K73, K87, K96, and K110 each participate in a glycyl lysine isopeptide (Lys-Gly) (interchain with G-Cter in SUMO2) cross-link. Residues 66-89 (HLCDDSQKQEKDMNGNQQEQEKSL) show a composition bias toward basic and acidic residues. Positions 66–106 (HLCDDSQKQEKDMNGNQQEQEKSLVVRKKRKSQQAGPSYVQ) are disordered. The interval 120–191 (QHLGTPSDED…HKWPRTETES (72 aa)) is disordered. Residues 132 to 151 (SSFSDCLSSPSSSLHFGDSD) are compositionally biased toward low complexity. The segment covering 164-173 (RHSQTILNAK) has biased composition (polar residues). A Glycyl lysine isopeptide (Lys-Gly) (interchain with G-Cter in SUMO2) cross-link involves residue K173. The span at 174 to 184 (SRSHSARSHKW) shows a compositional bias: basic residues. Glycyl lysine isopeptide (Lys-Gly) (interchain with G-Cter in SUMO2) cross-links involve residues K198 and K218. The tract at residues 241–404 (VLARRKYALL…VPTTSARMES (164 aa)) is interaction with AXIN1. The interval 248–277 (ALLPSSSSSSENDLSSESSSSSSTEGEEDL) is disordered. The segment covering 252-271 (SSSSSSENDLSSESSSSSST) has biased composition (low complexity). Residues 300–304 (VVVIE) carry the SUMO interaction motif 1 (SIM) motif. The SUMO interaction motif 2 (SIM) signature appears at 325–331 (EVEIVTV). A disordered region spans residues 337 to 373 (SRSTLGHSRSHWSQGSSSHASRPQEPRNRSRISTVIQ). The span at 347–357 (HWSQGSSSHAS) shows a compositional bias: low complexity. Positions 382-386 (VVDLT) match the SUMO interaction motif 3 (SIM) motif. 5 disordered regions span residues 389-471 (EDEP…ETGP), 506-561 (QQHG…SYHE), 610-646 (APSQ…RHYM), 659-684 (HQAS…VDYV), and 696-719 (ISSH…TAAP). Residues 395–466 (VPTTSARMES…DSRRTTSSAV (72 aa)) are compositionally biased toward polar residues. Over residues 508-522 (HGHHFQHHHHHHHTP) the composition is skewed to basic residues. Over residues 551-561 (ANSSSGTSYHE) the composition is skewed to polar residues. The span at 670–680 (NPPPQTQPPPQ) shows a compositional bias: pro residues. Positions 907–909 (YPH) are ubiquitin binding. Glycyl lysine isopeptide (Lys-Gly) (interchain with G-Cter in SUMO2) cross-links involve residues K915 and K919. Zn(2+)-binding residues include C934 and C937. Residues 934 to 975 (CTICLSILEEGEDVRRLPCMHLFHQVCVDQWLITNKKCPICR) form an RING-type; atypical zinc finger. The ubiquitin binding stretch occupies residues 949 to 953 (RLPCM). 2 residues coordinate Zn(2+): H957 and C960.

The protein belongs to the Arkadia family. Monomer. Interacts with SMAD6, SMAD7, AXIN1, AXIN2 and SKIL isoform SNON. Interacts with (phosphorylated) SMAD2 and SMAD3. Part of a complex containing RNF111, AXIN1 and SMAD7. Interacts (via SIM domains) with SUMO1 and SUMO2.

Its subcellular location is the nucleus. It localises to the cytoplasm. It is found in the PML body. The enzyme catalyses S-ubiquitinyl-[E2 ubiquitin-conjugating enzyme]-L-cysteine + [acceptor protein]-L-lysine = [E2 ubiquitin-conjugating enzyme]-L-cysteine + N(6)-ubiquitinyl-[acceptor protein]-L-lysine.. It functions in the pathway protein modification; protein ubiquitination. Its activity is regulated as follows. Binds free ubiquitin non-covalently via its RING-type zinc finger. Ubiquitin-binding leads to enhance the E3 ubiquitin-protein ligase activity by stabilizing the ubiquitin-conjugating enzyme E2 (donor ubiquitin) in the 'closed' conformation and activating ubiquitin transfer. Functionally, E3 ubiquitin-protein ligase. Required for mesoderm patterning during embryonic development. Acts as an enhancer of the transcriptional responses of the SMAD2/SMAD3 effectors, which are activated downstream of BMP. Acts by mediating ubiquitination and degradation of SMAD inhibitors such as SMAD7, inducing their proteasomal degradation and thereby enhancing the transcriptional activity of TGF-beta and BMP. In addition to enhance transcription of SMAD2/SMAD3 effectors, also regulates their turnover by mediating their ubiquitination and subsequent degradation, coupling their activation with degradation, thereby ensuring that only effectors 'in use' are degraded. Activates SMAD3/SMAD4-dependent transcription by triggering signal-induced degradation of SNON isoform of SKIL. Associates with UBE2D2 as an E2 enzyme. Specifically binds polysumoylated chains via SUMO interaction motifs (SIMs) and mediates ubiquitination of sumoylated substrates. Catalyzes 'Lys-63'-linked ubiquitination of sumoylated XPC in response to UV irradiation, promoting nucleotide excision repair. Mediates ubiquitination and degradation of sumoylated PML. The regulation of the BMP-SMAD signaling is however independent of sumoylation and is not dependent of SUMO interaction motifs (SIMs). The polypeptide is E3 ubiquitin-protein ligase Arkadia (RNF111) (Pongo abelii (Sumatran orangutan)).